A 187-amino-acid polypeptide reads, in one-letter code: Ribosome-recycling factor (187 aa).

Belongs to the RRF family.

The protein localises to the cytoplasm. Responsible for the release of ribosomes from messenger RNA at the termination of protein biosynthesis. May increase the efficiency of translation by recycling ribosomes from one round of translation to another. The sequence is that of Ribosome-recycling factor from Paracoccus zeaxanthinifaciens.